The primary structure comprises 308 residues: 3'(2'),5'-bisphosphate nucleotidase 1 (308 aa).

A2 is subject to N-acetylalanine. Residue D51 is the Proton acceptor of the active site. The Mg(2+) site is built by E74, D117, L119, and D120. T122 serves as the catalytic Proton acceptor. Position 122 is a phosphothreonine (T122). AMP contacts are provided by T195, H198, G220, and K224. At S240 the chain carries Phosphoserine. K244 is modified (N6-succinyllysine). Residue D247 participates in Mg(2+) binding.

It belongs to the inositol monophosphatase superfamily. Mg(2+) is required as a cofactor. In terms of tissue distribution, widely expressed. Highly expressed in kidney.

The catalysed reaction is adenosine 3',5'-bisphosphate + H2O = AMP + phosphate. It carries out the reaction adenosine 2',5'-bisphosphate + H2O = AMP + phosphate. It catalyses the reaction 3'-phosphoadenylyl sulfate + H2O = adenosine 5'-phosphosulfate + phosphate. The enzyme catalyses 1D-myo-inositol 1,4-bisphosphate + H2O = 1D-myo-inositol 4-phosphate + phosphate. The catalysed reaction is 1D-myo-inositol 1,3,4-trisphosphate + H2O = 1D-myo-inositol 3,4-bisphosphate + phosphate. Its activity is regulated as follows. Uncompetitively inhibited by Li(+) (IC(50)=157 uM). PAP hydrolysis is competitively inhibited by PAPS (IC(50)=0.7 uM) and by inositol 1,4-bisphosphate (IC(50)=15 uM). In terms of biological role, phosphatase that converts 3'(2')-phosphoadenosine 5'-phosphate (PAP) to AMP and adenosine 3'-phosphate 5'-phosphosulfate (PAPS) to adenosine 5'-phosphosulfate (APS). Is also able to hydrolyze inositol 1,4-bisphosphate (Ins(1,4)P2) and inositol 1,3,4-trisphosphate (Ins(1,3,4)P3), and is not active on Ins(1)P, Ins(4)P, Ins(3,4)P2, Ins(1,4,5)P3, Ins(1,3,4,5)P4, Ins(1,3,4,5,6)P5 or InsP6. Probably prevents the toxic accumulation of PAP, a compound which inhibits a variety of proteins, including PAPS-utilizing enzymes such as sulfotransferases, and RNA processing enzymes. Could also play a role in inositol recycling and phosphoinositide metabolism. The polypeptide is 3'(2'),5'-bisphosphate nucleotidase 1 (Bpnt1) (Mus musculus (Mouse)).